A 239-amino-acid polypeptide reads, in one-letter code: Phosphoglycolate phosphatase (239 aa).

Aspartate 14 (nucleophile) is an active-site residue. Mg(2+)-binding residues include aspartate 14 and aspartate 16. Lysine 160 contributes to the substrate binding site. 2 residues coordinate Mg(2+): aspartate 183 and aspartate 187.

Belongs to the archaeal SPP-like hydrolase family. Mg(2+) serves as cofactor.

It catalyses the reaction 2-phosphoglycolate + H2O = glycolate + phosphate. Functionally, catalyzes the dephosphorylation of 2-phosphoglycolate. The polypeptide is Phosphoglycolate phosphatase (Aeropyrum pernix (strain ATCC 700893 / DSM 11879 / JCM 9820 / NBRC 100138 / K1)).